The chain runs to 244 residues: uncharacterized protein (244 aa).

2 helical membrane-spanning segments follow: residues 29 to 49 (WIPW…TQHM) and 139 to 159 (LGMK…ATVI).

Belongs to the FMP10 family.

Its subcellular location is the mitochondrion membrane. This is an uncharacterized protein from Saccharomyces cerevisiae (strain ATCC 204508 / S288c) (Baker's yeast).